Reading from the N-terminus, the 139-residue chain is MQASELRFAPPSADKSALEEGRLFTPRFDANGLITAVVTDAGDGTLLMVAHMNAEALAKTLETGIAHYWSRSRSSLWKKGETSGNLQHVESISTDCDQDAVLLKVRVGGEGATCHTGRRSCFYRNVKVEDGRPILTENG.

Asp-95 contributes to the Mg(2+) binding site. Zn(2+) is bound at residue Cys-96. Mg(2+) contacts are provided by Asp-97 and Asp-99. Zn(2+)-binding residues include Cys-114 and Cys-121.

This sequence belongs to the PRA-CH family. As to quaternary structure, homodimer. It depends on Mg(2+) as a cofactor. Zn(2+) is required as a cofactor.

It localises to the cytoplasm. The enzyme catalyses 1-(5-phospho-beta-D-ribosyl)-5'-AMP + H2O = 1-(5-phospho-beta-D-ribosyl)-5-[(5-phospho-beta-D-ribosylamino)methylideneamino]imidazole-4-carboxamide. Its pathway is amino-acid biosynthesis; L-histidine biosynthesis; L-histidine from 5-phospho-alpha-D-ribose 1-diphosphate: step 3/9. Functionally, catalyzes the hydrolysis of the adenine ring of phosphoribosyl-AMP. The sequence is that of Phosphoribosyl-AMP cyclohydrolase from Chelativorans sp. (strain BNC1).